Reading from the N-terminus, the 224-residue chain is Large ribosomal subunit protein bL25 (224 aa).

A disordered region spans residues 196–224 (VEEVDTDAEEVDAADVPATEQGSEEDKGE). Acidic residues predominate over residues 197-208 (EEVDTDAEEVDA).

Belongs to the bacterial ribosomal protein bL25 family. CTC subfamily. Part of the 50S ribosomal subunit; part of the 5S rRNA/L5/L18/L25 subcomplex. Contacts the 5S rRNA. Binds to the 5S rRNA independently of L5 and L18.

This is one of the proteins that binds to the 5S RNA in the ribosome where it forms part of the central protuberance. This is Large ribosomal subunit protein bL25 from Psychrobacter sp. (strain PRwf-1).